A 1861-amino-acid chain; its full sequence is Golgi-specific brefeldin A-resistance guanine nucleotide exchange factor 1 (1861 aa).

A DCB; DCB:DCB domain and DCB:HUS domain interaction region spans residues 1 to 211 (MVDKNIYIIQ…EPKSYVGTNM (211 aa)). Residues 1–380 (MVDKNIYIIQ…SVHDMDYVNP (380 aa)) are interaction with RAB1B. Disordered stretches follow at residues 210 to 264 (NMKK…LTGG) and 289 to 353 (CTDS…VESI). Residues 227 to 241 (WKKQKRSPRPPRHTT) are compositionally biased toward basic residues. The segment covering 253 to 262 (NGATLPSNLT) has biased composition (polar residues). 2 positions are modified to phosphoserine: Ser349 and Ser352. Residue Thr507 is modified to Phosphothreonine. The interval 530–550 (RIPSFVTELYINYDCDYYCSN) is HUS; DCB:HUS domain interaction. The tract at residues 603–634 (QEKKETARPGFEAVDGNPETNKSERATSDGKS) is disordered. The region spanning 692–882 (ELIEIKNKKK…EDMYHAIKNE (191 aa)) is the SEC7 domain. A phosphatidylinositol-phosphate binding; required for translocation to the leading edge and for ARF1 activation upon GPCR signaling region spans residues 886 to 1372 (MPEEQTGLVR…LSRPGPSPLV (487 aa)). Over residues 1286-1296 (TARADAPDAGA) the composition is skewed to low complexity. Residues 1286 to 1335 (TARADAPDAGAQSDSELPSYHQNDVSLDRGYTSDSEVYTDHGRPGKIHRS) form a disordered region. The segment covering 1297 to 1310 (QSDSELPSYHQNDV) has biased composition (polar residues). Ser1298 carries the post-translational modification Phosphoserine. A Phosphotyrosine modification is found at Tyr1316. Ser1318, Ser1320, and Ser1335 each carry phosphoserine. Phosphothreonine is present on Thr1337. Disordered stretches follow at residues 1431-1486 (GCKS…EGVP) and 1727-1812 (PMPA…PLIL). Positions 1434–1448 (SQDKRSKSHKYDSKG) are enriched in basic and acidic residues. Phosphoserine is present on residues Ser1477, Ser1775, and Ser1786. Residues 1776–1793 (TRAPSSSSPGSPMASSPS) show a composition bias toward low complexity.

Can form homodimers and probably homotetramers. Interacts with COPG1; the interaction is independent on ARF1 activation. Interacts with ARF1, ARF3, ARF4 and ARF5. Interacts with RAB1B (GTP-bound form); required for GBF1 membrane association. Interacts with GGA1, GGA2 and GGA3. Interacts with USO1. Interacts (via SEC7 domain) with PNPLA2 (via C-terminus); the interaction is direct. Interacts with ARMH3.

Its subcellular location is the golgi apparatus. It is found in the cis-Golgi network. The protein resides in the endoplasmic reticulum-Golgi intermediate compartment. It localises to the trans-Golgi network. The protein localises to the cytoplasm. Its subcellular location is the lipid droplet. It is found in the membrane. Functionally, guanine-nucleotide exchange factor (GEF) for members of the Arf family of small GTPases involved in trafficking in the early secretory pathway; its GEF activity initiates the coating of nascent vesicles via the localized generation of activated ARFs through replacement of GDP with GTP. Recruitment to cis-Golgi membranes requires membrane association of Arf-GDP and can be regulated by ARF1, ARF3, ARF4 and ARF5. Involved in the recruitment of the COPI coat complex to the endoplasmic reticulum exit sites (ERES), and the endoplasmic reticulum-Golgi intermediate (ERGIC) and cis-Golgi compartments which implicates ARF1 activation. Involved in COPI vesicle-dependent retrograde transport from the ERGIC and cis-Golgi compartments to the endoplasmic reticulum (ER). Involved in the trans-Golgi network recruitment of GGA1, GGA2, GGA3, BIG1, BIG2, and the AP-1 adaptor protein complex related to chlathrin-dependent transport; the function requires its GEF activity (probably at least in part on ARF4 and ARF5). Has GEF activity towards ARF1. Has in vitro GEF activity towards ARF5. Involved in the processing of PSAP. Required for the assembly of the Golgi apparatus. The AMPK-phosphorylated form is involved in Golgi disassembly during mitotis and under stress conditions. May be involved in the COPI vesicle-dependent recruitment of PNPLA2 to lipid droplets; however, this function is under debate. In neutrophils, involved in G protein-coupled receptor (GPCR)-mediated chemotaxis und superoxide production. Proposed to be recruited by phosphatidylinositol-phosphates generated upon GPCR stimulation to the leading edge where it recruits and activates ARF1, and is involved in recruitment of GIT2 and the NADPH oxidase complex. Plays a role in maintaining mitochondrial morphology. The protein is Golgi-specific brefeldin A-resistance guanine nucleotide exchange factor 1 of Mus musculus (Mouse).